We begin with the raw amino-acid sequence, 286 residues long: Polyamine aminopropyltransferase (286 aa).

The region spanning Asp-3–Lys-240 is the PABS domain. Gln-32 provides a ligand contact to S-methyl-5'-thioadenosine. Residues His-63 and Asp-87 each coordinate spermidine. S-methyl-5'-thioadenosine contacts are provided by residues Glu-107 and Asp-139 to Gly-140. Asp-158 (proton acceptor) is an active-site residue. Asp-158–Asp-161 is a spermidine binding site. Pro-165 lines the S-methyl-5'-thioadenosine pocket.

It belongs to the spermidine/spermine synthase family. As to quaternary structure, homodimer or homotetramer.

The protein localises to the cytoplasm. The enzyme catalyses S-adenosyl 3-(methylsulfanyl)propylamine + putrescine = S-methyl-5'-thioadenosine + spermidine + H(+). It functions in the pathway amine and polyamine biosynthesis; spermidine biosynthesis; spermidine from putrescine: step 1/1. Catalyzes the irreversible transfer of a propylamine group from the amino donor S-adenosylmethioninamine (decarboxy-AdoMet) to putrescine (1,4-diaminobutane) to yield spermidine. This is Polyamine aminopropyltransferase from Clostridium acetobutylicum (strain ATCC 824 / DSM 792 / JCM 1419 / IAM 19013 / LMG 5710 / NBRC 13948 / NRRL B-527 / VKM B-1787 / 2291 / W).